The sequence spans 391 residues: Phosphoglycerate kinase (391 aa).

Residues 21–23 (DLN), arginine 36, 59–62 (HLGR), arginine 113, and arginine 146 each bind substrate. ATP contacts are provided by residues lysine 197, glutamate 319, and 345-348 (GGDT).

The protein belongs to the phosphoglycerate kinase family. In terms of assembly, monomer.

It is found in the cytoplasm. It carries out the reaction (2R)-3-phosphoglycerate + ATP = (2R)-3-phospho-glyceroyl phosphate + ADP. It functions in the pathway carbohydrate degradation; glycolysis; pyruvate from D-glyceraldehyde 3-phosphate: step 2/5. This Shewanella sp. (strain MR-4) protein is Phosphoglycerate kinase.